The chain runs to 610 residues: UvrABC system protein C (610 aa).

The GIY-YIG domain maps to 13–91 (HLPGVYRMYD…IKENQPKYNV (79 aa)). In terms of domain architecture, UVR spans 201-236 (GQVIEHLVQKMENAAQELDFEAAARFRDQIQSVRAV).

It belongs to the UvrC family. Interacts with UvrB in an incision complex.

It is found in the cytoplasm. In terms of biological role, the UvrABC repair system catalyzes the recognition and processing of DNA lesions. UvrC both incises the 5' and 3' sides of the lesion. The N-terminal half is responsible for the 3' incision and the C-terminal half is responsible for the 5' incision. The polypeptide is UvrABC system protein C (Actinobacillus pleuropneumoniae serotype 3 (strain JL03)).